Here is a 257-residue protein sequence, read N- to C-terminus: MSASRLERRIREAQAAGRPALIPFLTAGFPTPERFWDELEALDAAGADIIEVGVPFSDPVADGPVVAAASQRALESGVTLRWIMDGLAARKARLRAGLVLMGYLNPFMQYGFERFVTDAADAGVAGCIIPDLPLDEDADLRALLAARGMDLIALVGPNTGEGRMREYAAVASGYVYVVSVMGTTGVRDGLPVEVADTLARARQCFSIPVALGFGISRPAQLEGLSHPPDAVIFGSALLRHLDAGGDAASFMKAWAER.

Residues glutamate 51 and aspartate 62 each act as proton acceptor in the active site.

This sequence belongs to the TrpA family. Tetramer of two alpha and two beta chains.

It carries out the reaction (1S,2R)-1-C-(indol-3-yl)glycerol 3-phosphate + L-serine = D-glyceraldehyde 3-phosphate + L-tryptophan + H2O. Its pathway is amino-acid biosynthesis; L-tryptophan biosynthesis; L-tryptophan from chorismate: step 5/5. Its function is as follows. The alpha subunit is responsible for the aldol cleavage of indoleglycerol phosphate to indole and glyceraldehyde 3-phosphate. The chain is Tryptophan synthase alpha chain from Nitratidesulfovibrio vulgaris (strain DP4) (Desulfovibrio vulgaris).